Reading from the N-terminus, the 425-residue chain is tRNA(Ile)-lysidine synthase (425 aa).

27–32 (SGGLDS) lines the ATP pocket.

The protein belongs to the tRNA(Ile)-lysidine synthase family.

The protein localises to the cytoplasm. It carries out the reaction cytidine(34) in tRNA(Ile2) + L-lysine + ATP = lysidine(34) in tRNA(Ile2) + AMP + diphosphate + H(+). In terms of biological role, ligates lysine onto the cytidine present at position 34 of the AUA codon-specific tRNA(Ile) that contains the anticodon CAU, in an ATP-dependent manner. Cytidine is converted to lysidine, thus changing the amino acid specificity of the tRNA from methionine to isoleucine. The polypeptide is tRNA(Ile)-lysidine synthase (Streptococcus pneumoniae (strain JJA)).